The following is a 556-amino-acid chain: DNA ligase B (556 aa).

The active-site N6-AMP-lysine intermediate is lysine 124.

Belongs to the NAD-dependent DNA ligase family. LigB subfamily.

The enzyme catalyses NAD(+) + (deoxyribonucleotide)n-3'-hydroxyl + 5'-phospho-(deoxyribonucleotide)m = (deoxyribonucleotide)n+m + AMP + beta-nicotinamide D-nucleotide.. Functionally, catalyzes the formation of phosphodiester linkages between 5'-phosphoryl and 3'-hydroxyl groups in double-stranded DNA using NAD as a coenzyme and as the energy source for the reaction. The protein is DNA ligase B of Pseudomonas fluorescens (strain ATCC BAA-477 / NRRL B-23932 / Pf-5).